The primary structure comprises 526 residues: Probable feruloyl esterase B-2 (526 aa).

A signal peptide spans Met1 to Ala18. Disulfide bonds link Cys27-Cys74 and Cys62-Cys113. Asn52 carries an N-linked (GlcNAc...) asparagine glycan. Asn137 is a glycosylation site (N-linked (GlcNAc...) asparagine). Disulfide bonds link Cys186–Cys441, Cys255–Cys272, Cys281–Cys291, and Cys503–Cys525. Ser187 functions as the Acyl-ester intermediate in the catalytic mechanism. Asn233 is a glycosylation site (N-linked (GlcNAc...) asparagine). 5 residues coordinate Ca(2+): Asp256, Asp259, Ala261, Asp263, and Ile265. Residues Asp400 and His440 each act as charge relay system in the active site. The N-linked (GlcNAc...) asparagine glycan is linked to Asn516.

This sequence belongs to the tannase family.

It localises to the secreted. The enzyme catalyses feruloyl-polysaccharide + H2O = ferulate + polysaccharide.. Involved in degradation of plant cell walls. Hydrolyzes the feruloyl-arabinose ester bond in arabinoxylans as well as the feruloyl-galactose and feruloyl-arabinose ester bonds in pectin. The polypeptide is Probable feruloyl esterase B-2 (faeB-2) (Aspergillus fumigatus (strain ATCC MYA-4609 / CBS 101355 / FGSC A1100 / Af293) (Neosartorya fumigata)).